A 336-amino-acid polypeptide reads, in one-letter code: NEDD4 family-interacting protein 2 (336 aa).

2 disordered regions span residues 1–24 (MARR…RGAP) and 37–156 (SAAA…SITV). Residues 1–231 (MARRRSQRVC…ADQLRVGNDG (231 aa)) lie on the Cytoplasmic side of the membrane. The segment covering 37–48 (SAAAAGATGSEE) has biased composition (low complexity). Positions 78–99 (EHGEDSLSRKPDPEPGRMDHHQ) are enriched in basic and acidic residues. The interval 148–151 (PPPY) is interaction with NEDD4. The short motif at 148 to 151 (PPPY) is the PPxY motif 1 element. 4 positions are modified to phosphotyrosine; by SRC: Tyr151, Tyr167, Tyr171, and Tyr177. 2 consecutive short sequence motifs (PPxY motif) follow at residues 174 to 177 (PPPY) and 184 to 186 (PTY). Residues 232 to 252 (IFMLAFFMAFIFNWLGFCLSF) traverse the membrane as a helical segment. The Extracellular portion of the chain corresponds to 253-257 (CITNT). A helical transmembrane segment spans residues 258–278 (IAGRYGAICGFGLSLIKWILI). At 279-287 (VRFSDYFTG) the chain is on the cytoplasmic side. A helical membrane pass occupies residues 288–308 (YFNGQYWLWWIFLVLGLLLFF). The Extracellular segment spans residues 309 to 336 (RGFVNYLKVRNMSESMAAAHRTRYFFLL).

Forms heterodimers with NDFIP1. Interacts with HECT domain-containing E3 ubiquitin-protein ligases, including NEDD4. Interacts with NEDD4L. Interacts with PTEN. When phosphorylated at Tyr-167, interacts with SRC and LYN SH2 domain. May thus act as a scaffold that recruits SRC to NDFIP1, enhancing NDFIP1 phosphorylation. Interacts with SLC11A2/DMT1. May interact with phosphorylated EGFR. Interacts with KCNH2. In terms of processing, ubiquitinated by NEDD4 and ITCH. Also ubiquitinated by NEDD4L. Ubiquitination by NEDD4 or NEDD4L does not affect turnover. Post-translationally, undergoes transient tyrosine-phosphorylation following EGF stimulation, most probably catalyzed by SRC. Phosphorylation on Tyr-151, Tyr-171 and Tyr-177 are dependent on the phosphorylation on Tyr-167. Also phosphorylated by LYN and FYN. Expressed in brain, lung, heart, skeletal muscle, kidney, liver and placenta.

It is found in the endosome membrane. The protein localises to the golgi apparatus membrane. The protein resides in the endosome. It localises to the multivesicular body membrane. In terms of biological role, activates HECT domain-containing E3 ubiquitin-protein ligases, including ITCH, NEDD4, NEDD4L, SMURF2, WWP1 and WWP2, and consequently modulates the stability of their targets. As a result, may control many cellular processes. Recruits ITCH, NEDD4 and SMURF2 to endosomal membranes. Negatively regulates KCNH2 potassium channel activity by decreasing its cell-surface expression and interfering with channel maturation through recruitment of NEDD4L to the Golgi apparatus and multivesicular body where it mediates KCNH2 degradation. May modulate EGFR signaling. Together with NDFIP1, limits the cytokine signaling and expansion of effector Th2 T-cells by promoting degradation of JAK1, probably by ITCH- and NEDD4L-mediated ubiquitination. This chain is NEDD4 family-interacting protein 2 (NDFIP2), found in Homo sapiens (Human).